The chain runs to 376 residues: Queuine tRNA-ribosyltransferase (376 aa).

Aspartate 90 (proton acceptor) is an active-site residue. Residues 90-94, aspartate 144, glutamine 193, and glycine 220 contribute to the substrate site; that span reads DSGGF. Residues 251–257 are RNA binding; sequence GVGTPED. Aspartate 270 acts as the Nucleophile in catalysis. The tract at residues 275–279 is RNA binding; important for wobble base 34 recognition; it reads TRNAR. Cysteine 308, cysteine 310, cysteine 313, and histidine 339 together coordinate Zn(2+).

This sequence belongs to the queuine tRNA-ribosyltransferase family. Homodimer. Within each dimer, one monomer is responsible for RNA recognition and catalysis, while the other monomer binds to the replacement base PreQ1. Requires Zn(2+) as cofactor.

The catalysed reaction is 7-aminomethyl-7-carbaguanine + guanosine(34) in tRNA = 7-aminomethyl-7-carbaguanosine(34) in tRNA + guanine. The protein operates within tRNA modification; tRNA-queuosine biosynthesis. Functionally, catalyzes the base-exchange of a guanine (G) residue with the queuine precursor 7-aminomethyl-7-deazaguanine (PreQ1) at position 34 (anticodon wobble position) in tRNAs with GU(N) anticodons (tRNA-Asp, -Asn, -His and -Tyr). Catalysis occurs through a double-displacement mechanism. The nucleophile active site attacks the C1' of nucleotide 34 to detach the guanine base from the RNA, forming a covalent enzyme-RNA intermediate. The proton acceptor active site deprotonates the incoming PreQ1, allowing a nucleophilic attack on the C1' of the ribose to form the product. After dissociation, two additional enzymatic reactions on the tRNA convert PreQ1 to queuine (Q), resulting in the hypermodified nucleoside queuosine (7-(((4,5-cis-dihydroxy-2-cyclopenten-1-yl)amino)methyl)-7-deazaguanosine). In Cupriavidus pinatubonensis (strain JMP 134 / LMG 1197) (Cupriavidus necator (strain JMP 134)), this protein is Queuine tRNA-ribosyltransferase.